We begin with the raw amino-acid sequence, 514 residues long: Na(+)/H(+) antiporter NhaB (514 aa).

12 helical membrane-spanning segments follow: residues 23–43, 63–83, 97–117, 120–140, 144–164, 202–222, 238–258, 303–323, 357–377, 391–411, 447–467, and 475–495; these read LALL…PFIA, PLLP…TSAA, LLLM…LFIF, LLLS…AAAF, FLDA…FYGI, LMMH…VGEP, FFLR…LTCM, AVIG…VGLI, LTVF…APII, LFYL…VGTI, ATPN…APLI, and VWMA…CVEF.

This sequence belongs to the NhaB Na(+)/H(+) (TC 2.A.34) antiporter family.

It is found in the cell inner membrane. It carries out the reaction 2 Na(+)(in) + 3 H(+)(out) = 2 Na(+)(out) + 3 H(+)(in). Na(+)/H(+) antiporter that extrudes sodium in exchange for external protons. The chain is Na(+)/H(+) antiporter NhaB from Salmonella gallinarum (strain 287/91 / NCTC 13346).